The sequence spans 223 residues: Small ribosomal subunit protein uS3 (223 aa).

The KH type-2 domain occupies I39 to K108.

This sequence belongs to the universal ribosomal protein uS3 family. Part of the 30S ribosomal subunit. Forms a tight complex with proteins S10 and S14.

Binds the lower part of the 30S subunit head. Binds mRNA in the 70S ribosome, positioning it for translation. The polypeptide is Small ribosomal subunit protein uS3 (Clostridium botulinum (strain Kyoto / Type A2)).